We begin with the raw amino-acid sequence, 537 residues long: Lysosomal cobalamin transport escort protein LMBD1 (537 aa).

At Met1–Glu7 the chain is on the extracellular side. Residues Leu8–Val28 form a helical membrane-spanning segment. The Cytoplasmic segment spans residues Tyr29 to Ala47. Residues Ile48–Val68 form a helical membrane-spanning segment. Residues Ser69 to Gly97 are Extracellular-facing. 2 N-linked (GlcNAc...) asparagine glycosylation sites follow: Asn75 and Asn85. A helical membrane pass occupies residues Tyr98–Phe118. Residues Tyr119–Thr141 lie on the Cytoplasmic side of the membrane. Residues Leu142 to Leu162 traverse the membrane as a helical segment. Residues Pro163–Gln185 lie on the Extracellular side of the membrane. Residues Asn166 and Asn167 are each glycosylated (N-linked (GlcNAc...) asparagine). The chain crosses the membrane as a helical span at residues Gly186 to Ile206. Topologically, residues Thr207 to Lys302 are cytoplasmic. The YERL motif; mediates interaction with adapter protein complex 2 and is essential for its function in clathrin-mediated endocytosis of INSR signature appears at Tyr229–Leu232. Thr235 is modified (phosphothreonine). Residues Trp291–Phe294 carry the WTKF motif; mediates interaction with adapter protein complex 2 and is essential for its function in clathrin-mediated endocytosis of INSR motif. Residues Ile303–Ser323 traverse the membrane as a helical segment. Residues Asn324–Pro361 lie on the Extracellular side of the membrane. N-linked (GlcNAc...) asparagine glycosylation is present at Asn344. Residues Leu362–Ile382 traverse the membrane as a helical segment. The Cytoplasmic portion of the chain corresponds to Arg383–Gln405. The helical transmembrane segment at Ala406–Tyr426 threads the bilayer. Residues Ser427–Lys483 are Extracellular-facing. N-linked (GlcNAc...) asparagine glycans are attached at residues Asn445 and Asn454. The chain crosses the membrane as a helical span at residues Phe484 to Ile504. Residues Gly505–Ala537 are Cytoplasmic-facing. Ser525 and Ser528 each carry phosphoserine.

Belongs to the LIMR family. LMBRD1 subfamily. In terms of assembly, interacts with ABCD4; this interaction induces the translocation of ABCD4 from the endoplasmic reticulum to the lysosome. Interacts with ABCD4 and MMACHC; this interaction ensures the transport of cobalamin from the lysosome to the cytoplasm. Interacts with INSR, adapter protein complex 2 and clathrin heavy chain. Post-translationally, N-glycosylated.

Its subcellular location is the endoplasmic reticulum membrane. The protein resides in the lysosome membrane. It is found in the cell membrane. The protein localises to the cytoplasmic vesicle. It localises to the clathrin-coated vesicle. Its function is as follows. Lysosomal membrane chaperone required to export cobalamin (vitamin B12) from the lysosome to the cytosol, allowing its conversion to cofactors. Targets ABCD4 transporter from the endoplasmic reticulum to the lysosome. Then forms a complex with lysosomal ABCD4 and cytoplasmic MMACHC to transport cobalamin across the lysosomal membrane. Acts as an adapter protein which plays an important role in mediating and regulating the internalization of the insulin receptor (INSR). Involved in clathrin-mediated endocytosis of INSR via its interaction with adapter protein complex 2. Essential for the initiation of gastrulation and early formation of mesoderm structures during embryogenesis. The sequence is that of Lysosomal cobalamin transport escort protein LMBD1 from Mus musculus (Mouse).